The primary structure comprises 422 residues: MTYRDFIGRLKENGKLVEIQQPVSPIFEASRIAKKTKGPVLFHNVSGSKVIMNLLGSRDELSSMLGVPKEEIIKKLSEVSPEGEVRLVPGSPTLEVIESEVDLTKLPILTHFEKDGAPYITAGIVVSEYEGVMNASIHRLMLVGKDKLAARLVPPRHTYLLHKKAAEKGETLPVAIVLGCDPTIIYATSTRVPAGKEFEYAAALRGTPVEVFECSNGIKVPHSEIILEGYIDTKERVDEGPFVDITGTYDMVRKEPVIHITRIIHRKDPIYHGILPAGPEHLLMMGVPYEPRIYRAVGEVTTVKNVVLTEGGCCYLHAVVQIEKQTEGDAKNAIMAAFAAHTSLKHVVVVDEDINIFDPNDVEFAIATRVKGDMDILTITNVRGSSLDPRGASDGTTTKVGIDATKVLIEKENFERAIIPEE.

2 residues coordinate Mn(2+): Asn134 and Glu197. The active-site Proton acceptor is the Asp244.

Belongs to the UbiD family. Requires prenylated FMN as cofactor. Mn(2+) is required as a cofactor.

It catalyses the reaction (2E)-3-methyl-5-phosphooxypent-2-enoate + H(+) = isopentenyl phosphate + CO2. The protein operates within isoprenoid biosynthesis; isopentenyl diphosphate biosynthesis via mevalonate pathway. Functionally, catalyzes the conversion of trans-anhydromevalonate 5-phosphate (tAHMP) into isopentenyl phosphate. Involved in the archaeal mevalonate (MVA) pathway, which provides fundamental precursors for isoprenoid biosynthesis, such as isopentenyl diphosphate (IPP) and dimethylallyl diphosphate (DMAPP). This is Anhydromevalonate phosphate decarboxylase from Methanosarcina mazei (strain ATCC BAA-159 / DSM 3647 / Goe1 / Go1 / JCM 11833 / OCM 88) (Methanosarcina frisia).